Here is a 433-residue protein sequence, read N- to C-terminus: Glutamate-1-semialdehyde 2,1-aminomutase (433 aa).

Lys-273 bears the N6-(pyridoxal phosphate)lysine mark.

The protein belongs to the class-III pyridoxal-phosphate-dependent aminotransferase family. HemL subfamily. In terms of assembly, homodimer. It depends on pyridoxal 5'-phosphate as a cofactor.

The protein resides in the cytoplasm. The catalysed reaction is (S)-4-amino-5-oxopentanoate = 5-aminolevulinate. It functions in the pathway porphyrin-containing compound metabolism; protoporphyrin-IX biosynthesis; 5-aminolevulinate from L-glutamyl-tRNA(Glu): step 2/2. It participates in porphyrin-containing compound metabolism; chlorophyll biosynthesis. The protein is Glutamate-1-semialdehyde 2,1-aminomutase of Microcystis aeruginosa (strain NIES-843 / IAM M-2473).